Consider the following 813-residue polypeptide: Protein mac-1 (813 aa).

Coiled-coil stretches lie at residues 58 to 89 (VREALERIQLVAKEENDEKMEEKEAMDDVQEI) and 122 to 152 (SDDSEDERAARQLEKQIESLKTNRANKTVLN). Disordered regions lie at residues 97 to 131 (TRKRKAPAAGRKSTGQAAAAKEVVLSDDSEDERAA) and 152 to 193 (NLYT…GAVS). The span at 158–172 (SAPSTPVSTPKNQAT) shows a compositional bias: polar residues. The segment covering 175 to 191 (PPGASAAPPALPRGLGA) has biased composition (low complexity). Residues 246–253 (GPPGCGKT) and 575–582 (GPPGCGKT) each bind ATP.

It belongs to the AAA ATPase family. In terms of assembly, found in a complex composed of ced-3, ced-4 and mac-1 or of ced-9, ced-4 and mac-1. Within the complex, interacts with ced-4.

Its function is as follows. Probably together with ced-9, plays a modest role in preventing ced-4 and caspase ced-3-mediated apoptosis. The sequence is that of Protein mac-1 from Caenorhabditis elegans.